The primary structure comprises 317 residues: Beta-ketoacyl-[acyl-carrier-protein] synthase III (317 aa).

Catalysis depends on residues Cys-112 and His-244. The interval 245 to 249 (QANLR) is ACP-binding. The active site involves Asn-274.

The protein belongs to the thiolase-like superfamily. FabH family. As to quaternary structure, homodimer.

It is found in the cytoplasm. It carries out the reaction malonyl-[ACP] + acetyl-CoA + H(+) = 3-oxobutanoyl-[ACP] + CO2 + CoA. It functions in the pathway lipid metabolism; fatty acid biosynthesis. In terms of biological role, catalyzes the condensation reaction of fatty acid synthesis by the addition to an acyl acceptor of two carbons from malonyl-ACP. Catalyzes the first condensation reaction which initiates fatty acid synthesis and may therefore play a role in governing the total rate of fatty acid production. Possesses both acetoacetyl-ACP synthase and acetyl transacylase activities. Its substrate specificity determines the biosynthesis of branched-chain and/or straight-chain of fatty acids. This chain is Beta-ketoacyl-[acyl-carrier-protein] synthase III, found in Baumannia cicadellinicola subsp. Homalodisca coagulata.